The chain runs to 285 residues: NAD kinase (285 aa).

Asp64 serves as the catalytic Proton acceptor. Residues 64-65 (DG), 138-139 (ND), Arg149, Arg166, Asp168, Leu176, 179-184 (SGYTIS), and Gln238 contribute to the NAD(+) site.

Belongs to the NAD kinase family. It depends on a divalent metal cation as a cofactor.

Its subcellular location is the cytoplasm. It catalyses the reaction NAD(+) + ATP = ADP + NADP(+) + H(+). Involved in the regulation of the intracellular balance of NAD and NADP, and is a key enzyme in the biosynthesis of NADP. Catalyzes specifically the phosphorylation on 2'-hydroxyl of the adenosine moiety of NAD to yield NADP. This is NAD kinase from Lawsonia intracellularis (strain PHE/MN1-00).